We begin with the raw amino-acid sequence, 108 residues long: ATP synthase peripheral stalk subunit F6, mitochondrial (108 aa).

The N-terminal 32 residues, 1–32 (MVLQRIFRLSSVLRSAVSVHLKRNIGVTAVAF), are a transit peptide targeting the mitochondrion. An N6-acetyllysine mark is found at lysine 41, lysine 46, and lysine 79. N6-acetyllysine; alternate is present on residues lysine 84, lysine 94, and lysine 99. N6-succinyllysine; alternate occurs at positions 84, 94, and 99. Lysine 105 is subject to N6-acetyllysine. Phosphoserine is present on serine 108.

This sequence belongs to the eukaryotic ATPase subunit F6 family. Component of the ATP synthase complex composed at least of ATP5F1A/subunit alpha, ATP5F1B/subunit beta, ATP5MC1/subunit c (homooctomer), MT-ATP6/subunit a, MT-ATP8/subunit 8, ATP5ME/subunit e, ATP5MF/subunit f, ATP5MG/subunit g, ATP5MK/subunit k, ATP5MJ/subunit j, ATP5F1C/subunit gamma, ATP5F1D/subunit delta, ATP5F1E/subunit epsilon, ATP5PF/subunit F6, ATP5PB/subunit b, ATP5PD/subunit d, ATP5PO/subunit OSCP. ATP synthase complex consists of a soluble F(1) head domain (subunits alpha(3) and beta(3)) - the catalytic core - and a membrane F(0) domain - the membrane proton channel (subunits c, a, 8, e, f, g, k and j). These two domains are linked by a central stalk (subunits gamma, delta, and epsilon) rotating inside the F1 region and a stationary peripheral stalk (subunits F6, b, d, and OSCP).

The protein localises to the mitochondrion. The protein resides in the mitochondrion inner membrane. Its function is as follows. Subunit F6, of the mitochondrial membrane ATP synthase complex (F(1)F(0) ATP synthase or Complex V) that produces ATP from ADP in the presence of a proton gradient across the membrane which is generated by electron transport complexes of the respiratory chain. ATP synthase complex consist of a soluble F(1) head domain - the catalytic core - and a membrane F(1) domain - the membrane proton channel. These two domains are linked by a central stalk rotating inside the F(1) region and a stationary peripheral stalk. During catalysis, ATP synthesis in the catalytic domain of F(1) is coupled via a rotary mechanism of the central stalk subunits to proton translocation. In vivo, can only synthesize ATP although its ATP hydrolase activity can be activated artificially in vitro. Part of the complex F(0) domain. Part of the complex F(0) domain and the peripheric stalk, which acts as a stator to hold the catalytic alpha(3)beta(3) subcomplex and subunit a/ATP6 static relative to the rotary elements. In Mus musculus (Mouse), this protein is ATP synthase peripheral stalk subunit F6, mitochondrial.